The sequence spans 405 residues: uncharacterized protein (405 aa).

This is an uncharacterized protein from Saimiri sciureus (Common squirrel monkey).